A 434-amino-acid polypeptide reads, in one-letter code: D-inositol 3-phosphate glycosyltransferase (434 aa).

H26 serves as a coordination point for 1D-myo-inositol 3-phosphate. UDP-N-acetyl-alpha-D-glucosamine contacts are provided by residues Q32 to P33 and G40. Residues D37–N42, K95, Y128, T152, and R172 each bind 1D-myo-inositol 3-phosphate. UDP-N-acetyl-alpha-D-glucosamine is bound by residues R246 and K251. Mg(2+)-binding residues include Y321, R322, and A324. The UDP-N-acetyl-alpha-D-glucosamine site is built by E334 and E342. Residue T348 participates in Mg(2+) binding.

It belongs to the glycosyltransferase group 1 family. MshA subfamily. As to quaternary structure, homodimer.

It carries out the reaction 1D-myo-inositol 3-phosphate + UDP-N-acetyl-alpha-D-glucosamine = 1D-myo-inositol 2-acetamido-2-deoxy-alpha-D-glucopyranoside 3-phosphate + UDP + H(+). In terms of biological role, catalyzes the transfer of a N-acetyl-glucosamine moiety to 1D-myo-inositol 3-phosphate to produce 1D-myo-inositol 2-acetamido-2-deoxy-glucopyranoside 3-phosphate in the mycothiol biosynthesis pathway. This Thermobifida fusca (strain YX) protein is D-inositol 3-phosphate glycosyltransferase.